The following is a 329-amino-acid chain: Probable cell division protein WhiA (329 aa).

Residues 275–308 constitute a DNA-binding region (H-T-H motif); it reads SLEELGALADPPLTKDAVAGRIRRLLAMADKRAQ.

This sequence belongs to the WhiA family.

Its function is as follows. Involved in cell division and chromosome segregation. The polypeptide is Probable cell division protein WhiA (Streptomyces avermitilis (strain ATCC 31267 / DSM 46492 / JCM 5070 / NBRC 14893 / NCIMB 12804 / NRRL 8165 / MA-4680)).